We begin with the raw amino-acid sequence, 388 residues long: Phosphoglycerate kinase (388 aa).

Substrate contacts are provided by residues 24–26, Arg-37, 56–59, Arg-117, and Arg-165; these read DLN and RGGR. The segment at 26 to 136 is disordered; that stretch reads NVPLDSDGEQ…RRPRNVQGRR (111 aa). The segment covering 34-55 has biased composition (basic and acidic residues); the sequence is EQGRITDPGPDHRVGADVERTG. The segment covering 102–136 has biased composition (basic residues); sequence GGHRRPGPRRGVDRRRRPAAGKHPVRRPRNVQGRR. Residues Lys-215, Gly-303, Glu-334, and 363 to 366 contribute to the ATP site; that span reads GGDS.

This sequence belongs to the phosphoglycerate kinase family. Monomer.

It localises to the cytoplasm. The catalysed reaction is (2R)-3-phosphoglycerate + ATP = (2R)-3-phospho-glyceroyl phosphate + ADP. Its pathway is carbohydrate degradation; glycolysis; pyruvate from D-glyceraldehyde 3-phosphate: step 2/5. This Mycobacterium avium protein is Phosphoglycerate kinase (pgk).